We begin with the raw amino-acid sequence, 380 residues long: Alkanesulfonate monooxygenase (380 aa).

It belongs to the SsuD family. In terms of assembly, homotetramer.

It catalyses the reaction an alkanesulfonate + FMNH2 + O2 = an aldehyde + FMN + sulfite + H2O + 2 H(+). Catalyzes the desulfonation of aliphatic sulfonates. The polypeptide is Alkanesulfonate monooxygenase (Pectobacterium atrosepticum (strain SCRI 1043 / ATCC BAA-672) (Erwinia carotovora subsp. atroseptica)).